Here is a 347-residue protein sequence, read N- to C-terminus: NADH-ubiquinone oxidoreductase chain 2 (347 aa).

Helical transmembrane passes span 3–23 (PPILIIIMATIMTGTMIVMLS), 25–45 (HWLLIWIGFEMNMLAIIPILM), 66–86 (ASMLLMMGVTINLLYSGQWVI), 111–131 (FHFWVPEVTQGITLMSGMILL), 149–169 (INTNLLMLMALTSVLVGGWGG), 178–198 (IMAYSSIAHMGWMAAIITYNP), 201–221 (MVLNLTLYILMTLSTFMLFML), 237–257 (FPLITSMILILMLSLGGLPPL), 274–294 (NMIIIPTLMAITALLNLYFYL), and 325–345 (LLPPLIITSTMLLPLTPMLSV).

The protein belongs to the complex I subunit 2 family. Core subunit of respiratory chain NADH dehydrogenase (Complex I) which is composed of 45 different subunits. Interacts with TMEM242.

The protein localises to the mitochondrion inner membrane. It carries out the reaction a ubiquinone + NADH + 5 H(+)(in) = a ubiquinol + NAD(+) + 4 H(+)(out). In terms of biological role, core subunit of the mitochondrial membrane respiratory chain NADH dehydrogenase (Complex I) which catalyzes electron transfer from NADH through the respiratory chain, using ubiquinone as an electron acceptor. Essential for the catalytic activity and assembly of complex I. This chain is NADH-ubiquinone oxidoreductase chain 2, found in Canis lupus familiaris (Dog).